A 160-amino-acid polypeptide reads, in one-letter code: Tumor suppressor ARF (160 aa).

The tract at residues 1-63 is interaction with CDK5RAP3 and MDM2; the sequence is MGRRFVVTVR…RRGPQPHPGP (63 aa). 2 disordered regions span residues 49–74 and 90–116; these read PERIARRGPQPHPGPGDDDGQRQSGS and HPLPTGARRSAGGLPRHSGSTAPGRGA.

Does not interact with cyclins, CDK1, CDK2, CDK4, CDK5 or CDK6. Binds to BCL6, E2F1, HUWE1, MDM2, MYC, NPM1/B23, TOP1/TOPOI and UBE2I/UBC9. Interacts with TBRG1 and COMMD1. Interacts with CDKN2AIP and E4F1. Interacts with CDK5RAP3 and MDM2; form a ternary complex involved in regulation of p53/TP53. Interacts with NOP53; the interaction is direct and promotes ARF nucleoplasmic relocalization and ubiquitin-mediated proteasomal degradation. Interacts with TTF1 (via the N-terminal region (NRD) and a C-terminal region); the interaction is direct and inhibits the nucleolar localization of TTF1. Post-translationally, ubiquitinated in normal cells by TRIP12 via the ubiquitin fusion degradation (UFD) pathway, a process that mediates ubiquitination at the N-terminus, regardless of the absence of lysine residues. Ubiquitination leads to its proteasomal degradation. In cancer cells, however, TRIP12 is located in a different cell compartment, preventing ubiquitination and degradation. Widely expressed with very low levels in kidney and colon.

It is found in the nucleus. The protein localises to the nucleolus. It localises to the nucleoplasm. Its function is as follows. Capable of inducing cell cycle arrest in G1 and G2 phases. Acts as a tumor suppressor. Binds to MDM2 and blocks its nucleocytoplasmic shuttling by sequestering it in the nucleolus. This inhibits the oncogenic action of MDM2 by blocking MDM2-induced degradation of p53 and enhancing p53-dependent transactivation and apoptosis. Also induces G2 arrest and apoptosis in a p53-independent manner by preventing the activation of cyclin B1/CDC2 complexes. Binds to BCL6 and down-regulates BCL6-induced transcriptional repression. Binds to E2F1 and MYC and blocks their transcriptional activator activity but has no effect on MYC transcriptional repression. Binds to TOP1/TOPOI and stimulates its activity. This complex binds to rRNA gene promoters and may play a role in rRNA transcription and/or maturation. Interacts with NPM1/B23 and promotes its polyubiquitination and degradation, thus inhibiting rRNA processing. Plays a role in inhibiting ribosome biogenesis, perhaps by binding to the nucleolar localization sequence of transcription termination factor TTF1, and thereby preventing nucleolar localization of TTF1. Interacts with COMMD1 and promotes its 'Lys63'-linked polyubiquitination. Interacts with UBE2I/UBC9 and enhances sumoylation of a number of its binding partners including MDM2 and E2F1. Binds to HUWE1 and represses its ubiquitin ligase activity. May play a role in controlling cell proliferation and apoptosis during mammary gland development. The sequence is that of Tumor suppressor ARF from Rattus norvegicus (Rat).